We begin with the raw amino-acid sequence, 80 residues long: D-alanyl carrier protein (80 aa).

The region spanning 1–77 (MDIQKQIVDI…KLVEQVKKLQ (77 aa)) is the Carrier domain. O-(pantetheine 4'-phosphoryl)serine is present on S35.

The protein belongs to the DltC family. 4'-phosphopantetheine is transferred from CoA to a specific serine of apo-DCP.

It is found in the cytoplasm. It functions in the pathway cell wall biogenesis; lipoteichoic acid biosynthesis. Its function is as follows. Carrier protein involved in the D-alanylation of lipoteichoic acid (LTA). The loading of thioester-linked D-alanine onto DltC is catalyzed by D-alanine--D-alanyl carrier protein ligase DltA. The DltC-carried D-alanyl group is further transferred to cell membrane phosphatidylglycerol (PG) by forming an ester bond, probably catalyzed by DltD. D-alanylation of LTA plays an important role in modulating the properties of the cell wall in Gram-positive bacteria, influencing the net charge of the cell wall. This Lactobacillus delbrueckii subsp. bulgaricus (strain ATCC 11842 / DSM 20081 / BCRC 10696 / JCM 1002 / NBRC 13953 / NCIMB 11778 / NCTC 12712 / WDCM 00102 / Lb 14) protein is D-alanyl carrier protein.